The sequence spans 344 residues: Arginine N-succinyltransferase (344 aa).

Leu125 lines the succinyl-CoA pocket. The active-site Proton donor is the His229.

Belongs to the arginine N-succinyltransferase family.

The catalysed reaction is succinyl-CoA + L-arginine = N(2)-succinyl-L-arginine + CoA + H(+). Its pathway is amino-acid degradation; L-arginine degradation via AST pathway; L-glutamate and succinate from L-arginine: step 1/5. Its function is as follows. Catalyzes the transfer of succinyl-CoA to arginine to produce N(2)-succinylarginine. The polypeptide is Arginine N-succinyltransferase (Escherichia coli O127:H6 (strain E2348/69 / EPEC)).